The primary structure comprises 161 residues: Transcription antitermination protein NusB (161 aa).

It belongs to the NusB family.

Involved in transcription antitermination. Required for transcription of ribosomal RNA (rRNA) genes. Binds specifically to the boxA antiterminator sequence of the ribosomal RNA (rrn) operons. This is Transcription antitermination protein NusB from Nitrobacter winogradskyi (strain ATCC 25391 / DSM 10237 / CIP 104748 / NCIMB 11846 / Nb-255).